Reading from the N-terminus, the 417-residue chain is DnaJ protein homolog ANJ1 (417 aa).

The region spanning 11 to 76 is the J domain; it reads STRYYEILGV…REIYDQYGED (66 aa). A CR-type zinc finger spans residues 135–219; sequence GTTKKLSLSR…CKGEKVVQEK (85 aa). CXXCXGXG motif repeat units follow at residues 148-155, 164-171, and 191-198; these read CSKCTGKG, CSGCQGTG, and CNECKGTG. One copy of the CXXCXGXG motif; approximate repeat lies at 207–214; sequence CPQCKGEK. Residues 384 to 417 are disordered; it reads IEEEMKRKQTQAQQEAYDEDDEPAGGQRVQCAQQ. C414 is subject to Cysteine methyl ester. A lipid anchor (S-farnesyl cysteine) is attached at C414. The propeptide at 415-417 is removed in mature form; it reads AQQ.

The protein resides in the membrane. Functionally, plays a continuous role in plant development probably in the structural organization of compartments. The polypeptide is DnaJ protein homolog ANJ1 (Atriplex nummularia (Old man saltbush)).